We begin with the raw amino-acid sequence, 312 residues long: Ornithine carbamoyltransferase, catabolic (312 aa).

Carbamoyl phosphate contacts are provided by residues 57–60 (STRT), Gln-84, Arg-108, and 135–138 (HPTQ). Residues Asn-167, Asp-231, and 235-236 (SM) contribute to the L-ornithine site. 272–273 (CL) contacts carbamoyl phosphate.

It belongs to the aspartate/ornithine carbamoyltransferase superfamily. OTCase family.

It is found in the cytoplasm. It carries out the reaction carbamoyl phosphate + L-ornithine = L-citrulline + phosphate + H(+). It participates in amino-acid degradation; L-arginine degradation via ADI pathway; carbamoyl phosphate from L-arginine: step 2/2. In terms of biological role, reversibly catalyzes the transfer of the carbamoyl group from carbamoyl phosphate (CP) to the N(epsilon) atom of ornithine (ORN) to produce L-citrulline. The chain is Ornithine carbamoyltransferase, catabolic (arcB) from Mycoplasma capricolum subsp. capripneumoniae.